A 356-amino-acid chain; its full sequence is Histidinol-phosphate aminotransferase (356 aa).

K214 bears the N6-(pyridoxal phosphate)lysine mark.

This sequence belongs to the class-II pyridoxal-phosphate-dependent aminotransferase family. Histidinol-phosphate aminotransferase subfamily. In terms of assembly, homodimer. Pyridoxal 5'-phosphate is required as a cofactor.

The enzyme catalyses L-histidinol phosphate + 2-oxoglutarate = 3-(imidazol-4-yl)-2-oxopropyl phosphate + L-glutamate. It participates in amino-acid biosynthesis; L-histidine biosynthesis; L-histidine from 5-phospho-alpha-D-ribose 1-diphosphate: step 7/9. The protein is Histidinol-phosphate aminotransferase of Shigella sonnei (strain Ss046).